We begin with the raw amino-acid sequence, 124 residues long: uncharacterized protein (124 aa).

Positions 44–92 (DRVENSGNGTGSISAPLTDLGPSIGDSHENKGADIPIHPPLDTQSHAKD) are disordered. Over residues 48 to 58 (NSGNGTGSISA) the composition is skewed to polar residues.

This is an uncharacterized protein from Caenorhabditis elegans.